The sequence spans 105 residues: Met repressor (105 aa).

This sequence belongs to the MetJ family. Homodimer.

It is found in the cytoplasm. Functionally, this regulatory protein, when combined with SAM (S-adenosylmethionine) represses the expression of the methionine regulon and of enzymes involved in SAM synthesis. This chain is Met repressor, found in Erwinia tasmaniensis (strain DSM 17950 / CFBP 7177 / CIP 109463 / NCPPB 4357 / Et1/99).